The primary structure comprises 511 residues: MVLADFISIPTVSIACLAVLGIAYHRHQSNKNTRRPPGPKGYPFIGNLLELVSAERPHLLFPLWIKQYGDIVRFTVFGVENILISKFSTAIELLEKRGAIYSDRPHMVLENEILGWDAAMPTMRYGAQFRKHRKLSNALLNPNAARGYIAIHEEVSLRLLSALAAQPDQFYHHILIYATSTIFRISYDIDITDDKHDLVRLANGAVRKSAEAYQASGALVDVFPSLKWLYNSYPTTAPFSGYRKVIEDIKGEVVQANNIPYEMAKEKMRDGSATRSLVSDAITGLGGLDAISPADEHDIRGLAGILYAGQETTMVTITNTILAMIHHPEVQRKAQAEIDAVVPLDRLPTLDDRANIPYLEAFVKEAYRWACPLIIAIPHTVIQDDVYEGYFIPKGTSIIASIYDMLNQCPNAAAFNPDRFIDGTDLGDVPPDPRDVVFGFGRRRCPGLHVADNSVWAALAQLLASFEFLPELVDGKEVLPPLKWGKEMARHPQPYRCRIVPRENRKHCYAA.

Residues 2–22 (VLADFISIPTVSIACLAVLGI) traverse the membrane as a helical segment. Heme is bound at residue Cys445.

The protein belongs to the cytochrome P450 family. Heme serves as cofactor.

It localises to the membrane. The enzyme catalyses erinacol + reduced [NADPH--hemoprotein reductase] + O2 = cyathadiol + oxidized [NADPH--hemoprotein reductase] + H2O + H(+). Its pathway is secondary metabolite biosynthesis. In terms of biological role, cytochrome P450 monooxygenase; part of the gene cluster that mediates the biosynthesis of erinacines, cyathane-xylosides that show unique biological activities, including leishmanicidal activity, stimulating activity for nerve growth-factor synthesis, and agonistic activity toward the kappa opioid receptor. Within the pathway, eriC hydroxylates erinacol at C-15 of the seven-membered ring to yield cyathadiol. The first step of the erinacines biosynthesis pathway is catalyzed by the geranylgeranyl diphosphate (GGPP) synthase eriE via conversion of farnesyl pyrophosphate and isopentyl pyrophosphate into geranylgeranyl pyrophosphate (GGPP). GGPP is then substrate of the diterpene cyclase eriG for the production of cyatha-3,12-diene. The cytochrome P450 monooxygenase eriI then hydroxylates cyatha-3,12-diene at C-14 of the seven-membered ring to produce erinacol, which is further hydroxylated at C-15 by the cytochrome P450 monooxygenase eriC to yield cyathadiol. The cytochrome P450 monooxygenase eriA then catalyzes C-11 hydroxylation in the presence of the short chain dehydrogenase/reductase (SDR) eriH, which leads to the production of cyathatriol. The acetyltransferase eriL converts cyathatriol into 11-O-acetyl-cyathatriol. The SDR eriH catalyzes further oxidation of 11-O-acetyl-cyathatriol into 1-O-acetylcyathin A3. Finally, the glycosyl transferase eriJ tranfers xylose from UDP-xylose onto C-14 of 11-O-acetyl-cyathatriol to form eracine Q. EriJ is also able to convert 11-O-acetyl-cyathatriol to eracine Q2 by using UDP-D-glucose as cosubstrate, but at a lower rate. This is Cytochrome P450 monooxyhenase eriC from Hericium erinaceus (Lion's mane mushroom).